Consider the following 133-residue polypeptide: MEPISHLVKSSLPNYLSSLPVPDSIGGWFKLSFKDWLALIPPTVVVAGLGYTAYLAYCPAARASCAAKNSGRCNNHIRKNEPKVVDMIDVEDIAEKAAFCRCWKTKNWPYCDGSHGEHNKQTGDNVGPIVIKK.

Residues 1-35 (MEPISHLVKSSLPNYLSSLPVPDSIGGWFKLSFKD) lie on the Lumenal side of the membrane. Residues 36–58 (WLALIPPTVVVAGLGYTAYLAYC) form a helical membrane-spanning segment. The Cytoplasmic portion of the chain corresponds to 59–133 (PAARASCAAK…DNVGPIVIKK (75 aa)). Residues Cys-100, Cys-102, Cys-111, and His-115 each coordinate [2Fe-2S] cluster.

The protein belongs to the CISD protein family. CISD2 subfamily. It depends on [2Fe-2S] cluster as a cofactor.

The protein localises to the endoplasmic reticulum membrane. The sequence is that of CDGSH iron-sulfur domain protein from Drosophila melanogaster (Fruit fly).